The sequence spans 414 residues: Putative cytochrome P450 126 (414 aa).

Cys-363 is a heme binding site.

This sequence belongs to the cytochrome P450 family. Requires heme as cofactor.

The sequence is that of Putative cytochrome P450 126 (cyp126) from Mycobacterium tuberculosis (strain CDC 1551 / Oshkosh).